Here is a 107-residue protein sequence, read N- to C-terminus: Age-related maculopathy susceptibility protein 2 (107 aa).

Residues 1–21 are disordered; it reads MLRLYPGPMVTEAEGKGGPEM.

Detected in retina and placenta.

Its subcellular location is the cytoplasm. The protein is Age-related maculopathy susceptibility protein 2 (ARMS2) of Homo sapiens (Human).